The primary structure comprises 444 residues: Methylenetetrahydrofolate--tRNA-(uracil-5-)-methyltransferase TrmFO (444 aa).

G10–G15 is a binding site for FAD.

The protein belongs to the MnmG family. TrmFO subfamily. The cofactor is FAD.

Its subcellular location is the cytoplasm. It carries out the reaction uridine(54) in tRNA + (6R)-5,10-methylene-5,6,7,8-tetrahydrofolate + NADH + H(+) = 5-methyluridine(54) in tRNA + (6S)-5,6,7,8-tetrahydrofolate + NAD(+). The catalysed reaction is uridine(54) in tRNA + (6R)-5,10-methylene-5,6,7,8-tetrahydrofolate + NADPH + H(+) = 5-methyluridine(54) in tRNA + (6S)-5,6,7,8-tetrahydrofolate + NADP(+). In terms of biological role, catalyzes the folate-dependent formation of 5-methyl-uridine at position 54 (M-5-U54) in all tRNAs. In Streptococcus agalactiae serotype Ia (strain ATCC 27591 / A909 / CDC SS700), this protein is Methylenetetrahydrofolate--tRNA-(uracil-5-)-methyltransferase TrmFO.